The primary structure comprises 810 residues: Myoneurin (810 aa).

The BTB domain maps to 24–91; it reads CDCTVSIGQA…IYTGDLNMDR (68 aa). 2 disordered regions span residues 122–146 and 169–466; these read NVGSPMRQAEYEDPRSPLSPDDYEP and VSMD…VKPV. Over residues 173-183 the composition is skewed to polar residues; it reads EAQSSSEQTPQ. Basic residues-rich tracts occupy residues 185 to 194 and 211 to 225; these read VGKRGRKPKT and GRGRGRGRPRGRPRV. The segment covering 229–238 has biased composition (polar residues); the sequence is SSDSTDQSPA. The segment covering 243 to 253 has biased composition (low complexity); that stretch reads SPNGSSTSRGS. A DNA-binding region (a.T hook 1) is located at residues 254–266; sequence GRPRGRPRVRPLS. Residues 270–308 show a composition bias toward basic and acidic residues; it reads EDPRNVEDDPAANKDQEVEKGNEEQKKETGEKDDGKNDT. Positions 318–330 form a DNA-binding region, a.T hook 2; it reads KRGRGRPRIKPVS. Residues 331-346 show a composition bias toward polar residues; the sequence is TEDQTTNSENVTTNAE. A compositionally biased stretch (basic and acidic residues) spans 350-361; the sequence is EPAKTKDSEGTG. The a.T hook 3 DNA-binding region spans 361–373; it reads GRKRGRPRSKPVS. A compositionally biased stretch (acidic residues) spans 386–396; sequence SGEEAGEETSQ. The segment covering 419 to 428 has biased composition (basic residues); the sequence is ISKRKRILSR. Residues 428–432 carry the Nuclear localization signal motif; the sequence is RKLKE. Acidic residues predominate over residues 435 to 460; sequence AGDEEEEEEEEMDDEFENDNEDWAGE. 7 consecutive C2H2-type zinc fingers follow at residues 472 to 494, 500 to 522, 528 to 551, 557 to 579, 585 to 607, 613 to 635, and 641 to 663; these read PICNICGNLFSEMSSLRRHMRIH, YQCTLCTRSFRQGNQLKTHMRIH, FTCTSCDSRFAQKCQLVYHCRMHH, YKCEFCGAAFATSSNLKIHIRKH, YECGECGKRFTQASTLMYHKRRH, YICDTCGMAFAVSSSLIAHNRKH, and YICLDCGKPCLTAGELRKHMDVH.

It belongs to the krueppel C2H2-type zinc-finger protein family.

The protein resides in the nucleus. In Danio rerio (Zebrafish), this protein is Myoneurin (mynn).